Reading from the N-terminus, the 532-residue chain is Phosphoenolpyruvate carboxykinase (ATP) (532 aa).

3 residues coordinate substrate: Arg60, Tyr200, and Lys206. ATP-binding positions include Lys206, His225, and 242–250; that span reads GLSGTGKTT. Lys206 and His225 together coordinate Mn(2+). Ser244 contributes to the substrate binding site. Mn(2+) is bound at residue Asp263. ATP contacts are provided by residues Glu291, Arg327, 443-444, and Thr449; that span reads RI. Arg327 provides a ligand contact to substrate.

Belongs to the phosphoenolpyruvate carboxykinase (ATP) family. As to quaternary structure, monomer. Mn(2+) is required as a cofactor.

It is found in the cytoplasm. It catalyses the reaction oxaloacetate + ATP = phosphoenolpyruvate + ADP + CO2. It functions in the pathway carbohydrate biosynthesis; gluconeogenesis. With respect to regulation, inhibited by p-chloromercuribenzoate. Involved in gluconeogenesis. Catalyzes the conversion of oxaloacetate (OAA) to phosphoenolpyruvate (PEP) through direct phosphoryl transfer between the nucleoside triphosphate and OAA. The protein is Phosphoenolpyruvate carboxykinase (ATP) of Anaerobiospirillum succiniciproducens.